The following is a 576-amino-acid chain: Vacuolar protein sorting-associated protein vps5 (576 aa).

Disordered regions lie at residues 1 to 60 (MLGH…PRKR) and 156 to 198 (DAAS…APQS). Threonine 55 bears the Phosphothreonine mark. Positions 156-169 (DAASSSAPNFTHTV) are enriched in polar residues. Positions 170–181 (SSASSQKQGSTS) are enriched in low complexity. One can recognise a PX domain in the interval 200 to 317 (TPFYIQVHDP…KLFLEAETFD (118 aa)). A 1,2-diacyl-sn-glycero-3-phospho-(1D-myo-inositol-3-phosphate) is bound by residues arginine 244, lysine 270, and arginine 284. Serine 332 carries the phosphoserine modification.

It belongs to the sorting nexin family. In terms of assembly, component of the retromer complex which consists of vps29, vps26, vps35, vps5 and vps17.

The protein localises to the cytoplasm. The protein resides in the golgi apparatus. It is found in the membrane. Required for efficient sporulation target of PtdIns(3)P in vesicle transport required for onset of the forespore membrane formation. Functionally, plays a role in vesicular protein sorting. Required for the endosome-to-Golgi retrieval of the vacuolar protein sorting receptor pep1/vps10. Component of the membrane-associated retromer complex which is essential in endosome-to-Golgi retrograde transport. The vps29-vps26-vps35 subcomplex may be involved in cargo selection. The chain is Vacuolar protein sorting-associated protein vps5 (vps5) from Schizosaccharomyces pombe (strain 972 / ATCC 24843) (Fission yeast).